Reading from the N-terminus, the 181-residue chain is Translationally-controlled tumor protein homolog (181 aa).

Residues 1–181 enclose the TCTP domain; the sequence is MLIYKDIFTD…VKEAILEEKC (181 aa).

It belongs to the TCTP family.

Its subcellular location is the cytoplasm. In terms of biological role, involved in calcium binding and microtubule stabilization. This is Translationally-controlled tumor protein homolog (tct-1) from Caenorhabditis briggsae.